We begin with the raw amino-acid sequence, 104 residues long: ATP-dependent Clp protease adapter protein ClpS (104 aa).

The protein belongs to the ClpS family. In terms of assembly, binds to the N-terminal domain of the chaperone ClpA.

Involved in the modulation of the specificity of the ClpAP-mediated ATP-dependent protein degradation. This chain is ATP-dependent Clp protease adapter protein ClpS, found in Oleidesulfovibrio alaskensis (strain ATCC BAA-1058 / DSM 17464 / G20) (Desulfovibrio alaskensis).